Consider the following 204-residue polypeptide: U1 small nuclear ribonucleoprotein C (204 aa).

The segment at 4-36 (FFCDYCDVYLTHDSMSVRKAHNSGRNHLRNVVD) adopts a Matrin-type zinc-finger fold. Positions 65 to 204 (ANPMLPQNQP…GAGAPGHEKR (140 aa)) are disordered. Pro residues-rich tracts occupy residues 77 to 154 (GFPP…PGAP) and 166 to 192 (APPP…PGFA).

This sequence belongs to the U1 small nuclear ribonucleoprotein C family. U1 snRNP is composed of the 7 core Sm proteins B/B', D1, D2, D3, E, F and G that assemble in a heptameric protein ring on the Sm site of the small nuclear RNA to form the core snRNP, and at least 3 U1 snRNP-specific proteins U1-70K, U1-A and U1-C. U1-C interacts with U1 snRNA and the 5' splice-site region of the pre-mRNA.

The protein resides in the nucleus. Its function is as follows. Component of the spliceosomal U1 snRNP, which is essential for recognition of the pre-mRNA 5' splice-site and the subsequent assembly of the spliceosome. U1-C is directly involved in initial 5' splice-site recognition for both constitutive and regulated alternative splicing. The interaction with the 5' splice-site seems to precede base-pairing between the pre-mRNA and the U1 snRNA. Stimulates commitment or early (E) complex formation by stabilizing the base pairing of the 5' end of the U1 snRNA and the 5' splice-site region. The chain is U1 small nuclear ribonucleoprotein C from Fusarium vanettenii (strain ATCC MYA-4622 / CBS 123669 / FGSC 9596 / NRRL 45880 / 77-13-4) (Fusarium solani subsp. pisi).